We begin with the raw amino-acid sequence, 795 residues long: Copper-exporting P-type ATPase (795 aa).

2 HMA domains span residues Gln-5–Val-70 and Asp-72–Gln-138. The Cu(+) site is built by Cys-16, Cys-19, Cys-83, and Cys-86. A run of 6 helical transmembrane segments spans residues Leu-161–Asn-181, Ile-187–Trp-207, Met-224–Ile-244, Leu-256–Ala-276, Tyr-412–Val-432, and Ala-440–Thr-460. The active-site 4-aspartylphosphate intermediate is the Asp-496. Mg(2+) is bound by residues Asp-690 and Asp-694. 2 helical membrane-spanning segments follow: residues Asn-747 to Met-764 and Trp-770 to Leu-788.

It belongs to the cation transport ATPase (P-type) (TC 3.A.3) family. Type IB subfamily.

It localises to the cell membrane. The catalysed reaction is Cu(+)(in) + ATP + H2O = Cu(+)(out) + ADP + phosphate + H(+). In terms of biological role, involved in copper export. The chain is Copper-exporting P-type ATPase (copA) from Staphylococcus haemolyticus (strain JCSC1435).